Consider the following 193-residue polypeptide: 3-isopropylmalate dehydratase small subunit (193 aa).

This sequence belongs to the LeuD family. LeuD type 1 subfamily. Heterodimer of LeuC and LeuD.

It catalyses the reaction (2R,3S)-3-isopropylmalate = (2S)-2-isopropylmalate. It participates in amino-acid biosynthesis; L-leucine biosynthesis; L-leucine from 3-methyl-2-oxobutanoate: step 2/4. Catalyzes the isomerization between 2-isopropylmalate and 3-isopropylmalate, via the formation of 2-isopropylmaleate. The polypeptide is 3-isopropylmalate dehydratase small subunit (Bacillus cereus (strain ATCC 10987 / NRS 248)).